The chain runs to 447 residues: RNA-binding protein 208 (447 aa).

2 RRM domains span residues 73–147 (RSVY…WAYA) and 158–236 (FHIF…WATK). Positions 254–269 (TNGSSSNPGMEASQDT) are enriched in polar residues. Disordered regions lie at residues 254-279 (TNGS…ENNP) and 353-372 (WGNK…PPLP). Residues 282–356 (TTVYVGNLGH…KPIKCSWGNK (75 aa)) enclose the RRM 3 domain.

As to quaternary structure, interacts with RBP-P.

Functionally, RNA-binding protein. This is RNA-binding protein 208 from Oryza sativa subsp. japonica (Rice).